The primary structure comprises 252 residues: ELH type 2 (252 aa).

Positions 1–19 are cleaved as a signal peptide; it reads AISLLMCLILSALCASSES. 3 consecutive propeptides follow at residues 20-75, 92-130, and 144-185; these read AVVH…VNNE, PQEVSGLKPVMMSRASASADENSLFDLYNTDGAMYQREL, and AAGD…SGIA. Positions 145–161 are enriched in basic and acidic residues; sequence AGDEDKAEEHNPETESH. Residues 145 to 171 form a disordered region; it reads AGDEDKAEEHNPETESHSRRKRSALTP. The residue at position 222 (lysine 222) is a Lysine amide.

This sequence belongs to the molluscan ELH family. In terms of tissue distribution, bag cell neurons.

The protein localises to the secreted. ELH acts as a neurotransmitter locally, upon neurons of the abdominal ganglion and as a hormone by diffusing into the circulating hemolymph and modulating the activity of other organs. It specifically causes contraction of smooth muscle in the ovotestis and expulsion of the egg string. Functionally, alpha-BCP decreases the activity of a cluster of neurons in the left upper quadrant of the abdominal ganglion. Its function is as follows. Beta-BCP specifically excites 2 neurons, L1 and R1, in the abdominal ganglion. This is ELH type 2 (ELH2) from Aplysia parvula (Dwarf sea hare).